The following is a 1755-amino-acid chain: Transposon Ty1-NL1 Gag-Pol polyprotein (1755 aa).

4 stretches are compositionally biased toward polar residues: residues 1-23 (MESQ…SVTS), 48-60 (TKAN…TPAS), 71-86 (SPQT…GPYQ), and 131-152 (PQYP…GNTF). Disordered regions lie at residues 1 to 86 (MESQ…GPYQ), 131 to 171 (PQYP…YVRP), and 350 to 420 (QQES…IRGS). Residues 153 to 165 (TDSSSADSDMTST) are compositionally biased toward low complexity. The tract at residues 299-401 (NNGIPINNKV…NSQSRTARAH (103 aa)) is RNA-binding. Positions 363-372 (NPSDEKKDSR) are enriched in basic and acidic residues. Residues 373 to 412 (TYTNTTKPKSITRNSQKPNNSQSRTARAHNVSTSNNSSGP) show a composition bias toward polar residues. The active-site For protease activity; shared with dimeric partner is the D461. The segment at 583-640 (NVHTSESTRKYPYPFIHRMLAHANAQTIRYSLKNNTITYFNESDVDWSSAIDYQCPDC) is integrase-type zinc finger-like. Positions 660–835 (NSYEPFQYLH…AGLDISTLLP (176 aa)) constitute an Integrase catalytic domain. Residues D671 and D736 each contribute to the Mg(2+) site. Disordered stretches follow at residues 956–1120 (SKAV…TCPK) and 1146–1172 (DSFK…SNAY). The span at 960–969 (SPTDSTPPST) shows a compositional bias: low complexity. The segment covering 1005 to 1015 (STPQISDIEST) has biased composition (polar residues). Residues 1038-1053 (ESSHTSKSKDFRHSDS) are compositionally biased toward basic and acidic residues. Composition is skewed to polar residues over residues 1054–1082 (YSDN…QTSE) and 1095–1106 (SIDTSSSESNSL). Positions 1178–1212 (KKRSLEDNETEIKVSRDTWNTKNMRSLEPPRSKKR) match the Bipartite nuclear localization signal motif. Positions 1338 to 1476 (NNYYITQLDI…DILGLEIKYQ (139 aa)) constitute a Reverse transcriptase Ty1/copia-type domain. Positions 1346, 1427, 1428, 1610, 1652, and 1685 each coordinate Mg(2+). Positions 1610-1752 (DASYGNQPYY…IKTFKLLTNK (143 aa)) constitute an RNase H Ty1/copia-type domain.

The capsid protein forms a homotrimer, from which the VLPs are assembled. The protease is a homodimer, whose active site consists of two apposed aspartic acid residues. Initially, virus-like particles (VLPs) are composed of the structural unprocessed proteins Gag and Gag-Pol, and also contain the host initiator methionine tRNA (tRNA(i)-Met) which serves as a primer for minus-strand DNA synthesis, and a dimer of genomic Ty RNA. Processing of the polyproteins occurs within the particle and proceeds by an ordered pathway, called maturation. First, the protease (PR) is released by autocatalytic cleavage of the Gag-Pol polyprotein yielding capsid protein p45 and a Pol-p154 precursor protein. This cleavage is a prerequisite for subsequent processing of Pol-p154 at the remaining sites to release the mature structural and catalytic proteins. Maturation takes place prior to the RT reaction and is required to produce transposition-competent VLPs.

The protein localises to the cytoplasm. The protein resides in the nucleus. The catalysed reaction is DNA(n) + a 2'-deoxyribonucleoside 5'-triphosphate = DNA(n+1) + diphosphate. The enzyme catalyses Endonucleolytic cleavage to 5'-phosphomonoester.. Capsid protein (CA) is the structural component of the virus-like particle (VLP), forming the shell that encapsulates the retrotransposons dimeric RNA genome. The particles are assembled from trimer-clustered units and there are holes in the capsid shells that allow for the diffusion of macromolecules. CA also has nucleocapsid-like chaperone activity, promoting primer tRNA(i)-Met annealing to the multipartite primer-binding site (PBS), dimerization of Ty1 RNA and initiation of reverse transcription. Its function is as follows. The aspartyl protease (PR) mediates the proteolytic cleavages of the Gag and Gag-Pol polyproteins after assembly of the VLP. In terms of biological role, reverse transcriptase/ribonuclease H (RT) is a multifunctional enzyme that catalyzes the conversion of the retro-elements RNA genome into dsDNA within the VLP. The enzyme displays a DNA polymerase activity that can copy either DNA or RNA templates, and a ribonuclease H (RNase H) activity that cleaves the RNA strand of RNA-DNA heteroduplexes during plus-strand synthesis and hydrolyzes RNA primers. The conversion leads to a linear dsDNA copy of the retrotransposon that includes long terminal repeats (LTRs) at both ends. Functionally, integrase (IN) targets the VLP to the nucleus, where a subparticle preintegration complex (PIC) containing at least integrase and the newly synthesized dsDNA copy of the retrotransposon must transit the nuclear membrane. Once in the nucleus, integrase performs the integration of the dsDNA into the host genome. The sequence is that of Transposon Ty1-NL1 Gag-Pol polyprotein (TY1B-NL1) from Saccharomyces cerevisiae (strain ATCC 204508 / S288c) (Baker's yeast).